Here is a 189-residue protein sequence, read N- to C-terminus: MAGLTQSPSPPAPSLLSAQTEGGEFVESLGFNGTLLAQMFNFLVLLILLRAVAYKPFMNMLEKRRELIEGSIAAAEEDKKQAEQLRATLQADLQRSREQATEMMARATKNAEEQAQQIIEAAKAEAARVKDSALSEIQREKERAVAELRDQVATLSILVAGKIIDQKLNDDVQKDLVNKFVKEAGDLPC.

Residues 35-54 (LLAQMFNFLVLLILLRAVAY) traverse the membrane as a helical segment.

This sequence belongs to the ATPase B chain family. As to quaternary structure, F-type ATPases have 2 components, F(1) - the catalytic core - and F(0) - the membrane proton channel. F(1) has five subunits: alpha(3), beta(3), gamma(1), delta(1), epsilon(1). F(0) has three main subunits: a(1), b(2) and c(10-14). The alpha and beta chains form an alternating ring which encloses part of the gamma chain. F(1) is attached to F(0) by a central stalk formed by the gamma and epsilon chains, while a peripheral stalk is formed by the delta and b chains.

The protein resides in the cell membrane. In terms of biological role, f(1)F(0) ATP synthase produces ATP from ADP in the presence of a proton or sodium gradient. F-type ATPases consist of two structural domains, F(1) containing the extramembraneous catalytic core and F(0) containing the membrane proton channel, linked together by a central stalk and a peripheral stalk. During catalysis, ATP synthesis in the catalytic domain of F(1) is coupled via a rotary mechanism of the central stalk subunits to proton translocation. Its function is as follows. Component of the F(0) channel, it forms part of the peripheral stalk, linking F(1) to F(0). This Desulforamulus reducens (strain ATCC BAA-1160 / DSM 100696 / MI-1) (Desulfotomaculum reducens) protein is ATP synthase subunit b.